The primary structure comprises 607 residues: Elongation factor 4 (607 aa).

Residues 11-193 enclose the tr-type G domain; sequence EKIRNFSIIA…QIVEKVPAPT (183 aa). Residues 23-28 and 140-143 each bind GTP; these read DHGKST and NKID.

It belongs to the TRAFAC class translation factor GTPase superfamily. Classic translation factor GTPase family. LepA subfamily.

The protein resides in the cell membrane. The catalysed reaction is GTP + H2O = GDP + phosphate + H(+). Required for accurate and efficient protein synthesis under certain stress conditions. May act as a fidelity factor of the translation reaction, by catalyzing a one-codon backward translocation of tRNAs on improperly translocated ribosomes. Back-translocation proceeds from a post-translocation (POST) complex to a pre-translocation (PRE) complex, thus giving elongation factor G a second chance to translocate the tRNAs correctly. Binds to ribosomes in a GTP-dependent manner. The chain is Elongation factor 4 from Streptococcus pneumoniae (strain Hungary19A-6).